We begin with the raw amino-acid sequence, 342 residues long: Dihydroorotase (342 aa).

Positions 13 and 15 each coordinate Zn(2+). Substrate-binding positions include 15 to 17 (HLR) and Asn41. Lys98, His135, and His173 together coordinate Zn(2+). Lys98 is subject to N6-carboxylysine. His135 is a substrate binding site. Leu218 contacts substrate. Asp246 lines the Zn(2+) pocket. The active site involves Asp246. Substrate-binding residues include His250 and Ala262.

This sequence belongs to the metallo-dependent hydrolases superfamily. DHOase family. Class II DHOase subfamily. In terms of assembly, homodimer. The cofactor is Zn(2+).

The catalysed reaction is (S)-dihydroorotate + H2O = N-carbamoyl-L-aspartate + H(+). It participates in pyrimidine metabolism; UMP biosynthesis via de novo pathway; (S)-dihydroorotate from bicarbonate: step 3/3. Functionally, catalyzes the reversible cyclization of carbamoyl aspartate to dihydroorotate. This Vibrio parahaemolyticus serotype O3:K6 (strain RIMD 2210633) protein is Dihydroorotase.